The primary structure comprises 185 residues: Inner membrane-spanning protein YciB (185 aa).

5 helical membrane passes run 19–39, 53–73, 76–96, 118–138, and 149–169; these read LGGVREAAIVLVVATILQIVI, IMASAVVFFGLLTAYFNEIRY, WKVTIINGLFAIVLLIAQFQF, TLNFGWAIFFIICMLVNIYIS, and FKSFGIIGMTVIATIISGVYI.

Belongs to the YciB family.

The protein resides in the cell inner membrane. Functionally, plays a role in cell envelope biogenesis, maintenance of cell envelope integrity and membrane homeostasis. The chain is Inner membrane-spanning protein YciB from Haemophilus influenzae (strain PittEE).